The chain runs to 307 residues: UDP-N-acetylenolpyruvoylglucosamine reductase (307 aa).

Positions 33–197 (TGGNADFYIT…LEAAFTLAPG (165 aa)) constitute an FAD-binding PCMH-type domain. Arg176 is a catalytic residue. The Proton donor role is filled by Ser226. The active site involves Glu296.

Belongs to the MurB family. FAD is required as a cofactor.

The protein localises to the cytoplasm. It catalyses the reaction UDP-N-acetyl-alpha-D-muramate + NADP(+) = UDP-N-acetyl-3-O-(1-carboxyvinyl)-alpha-D-glucosamine + NADPH + H(+). Its pathway is cell wall biogenesis; peptidoglycan biosynthesis. Its function is as follows. Cell wall formation. The protein is UDP-N-acetylenolpyruvoylglucosamine reductase of Staphylococcus aureus (strain NCTC 8325 / PS 47).